Consider the following 128-residue polypeptide: Cytochrome c-type biogenesis protein CcmE (128 aa).

Topologically, residues 1–8 (MQKIVRNR) are cytoplasmic. A helical; Signal-anchor for type II membrane protein membrane pass occupies residues 9-29 (LIKIILCFCSTCLGISIILYN). The Periplasmic portion of the chain corresponds to 30-128 (LEKNIIFFFP…KHDENYRPPS (99 aa)). The heme site is built by H120 and Y124.

The protein belongs to the CcmE/CycJ family.

The protein localises to the cell inner membrane. Heme chaperone required for the biogenesis of c-type cytochromes. Transiently binds heme delivered by CcmC and transfers the heme to apo-cytochromes in a process facilitated by CcmF and CcmH. The polypeptide is Cytochrome c-type biogenesis protein CcmE (Rickettsia typhi (strain ATCC VR-144 / Wilmington)).